We begin with the raw amino-acid sequence, 514 residues long: ATP synthase subunit alpha (514 aa).

Residue 170–177 participates in ATP binding; the sequence is GDRQIGKT.

Belongs to the ATPase alpha/beta chains family. As to quaternary structure, F-type ATPases have 2 components, CF(1) - the catalytic core - and CF(0) - the membrane proton channel. CF(1) has five subunits: alpha(3), beta(3), gamma(1), delta(1), epsilon(1). CF(0) has three main subunits: a(1), b(2) and c(9-12). The alpha and beta chains form an alternating ring which encloses part of the gamma chain. CF(1) is attached to CF(0) by a central stalk formed by the gamma and epsilon chains, while a peripheral stalk is formed by the delta and b chains.

It localises to the cell inner membrane. The enzyme catalyses ATP + H2O + 4 H(+)(in) = ADP + phosphate + 5 H(+)(out). Its function is as follows. Produces ATP from ADP in the presence of a proton gradient across the membrane. The alpha chain is a regulatory subunit. This Pseudomonas putida (strain ATCC 700007 / DSM 6899 / JCM 31910 / BCRC 17059 / LMG 24140 / F1) protein is ATP synthase subunit alpha.